We begin with the raw amino-acid sequence, 195 residues long: HTH-type transcriptional regulator BetI (195 aa).

The region spanning 8-68 is the HTH tetR-type domain; it reads SIRRRQLIDA…ATMRDITSQL (61 aa). The segment at residues 31–50 is a DNA-binding region (H-T-H motif); it reads TIAQIARRAGVSTGIISHYF.

The protein operates within amine and polyamine biosynthesis; betaine biosynthesis via choline pathway [regulation]. In terms of biological role, repressor involved in the biosynthesis of the osmoprotectant glycine betaine. It represses transcription of the choline transporter BetT and the genes of BetAB involved in the synthesis of glycine betaine. The protein is HTH-type transcriptional regulator BetI of Escherichia coli O127:H6 (strain E2348/69 / EPEC).